The chain runs to 101 residues: Large ribosomal subunit protein uL24 (101 aa).

It belongs to the universal ribosomal protein uL24 family. As to quaternary structure, part of the 50S ribosomal subunit.

Functionally, one of two assembly initiator proteins, it binds directly to the 5'-end of the 23S rRNA, where it nucleates assembly of the 50S subunit. In terms of biological role, one of the proteins that surrounds the polypeptide exit tunnel on the outside of the subunit. This chain is Large ribosomal subunit protein uL24, found in Streptococcus equi subsp. zooepidemicus (strain H70).